The primary structure comprises 453 residues: Ribosome biogenesis protein SSF1 (453 aa).

A compositionally biased stretch (basic residues) spans 1–11 (MAKRRQKKRTH). Disordered regions lie at residues 1–22 (MAKR…EQGI), 275–324 (KAKH…PRKK), and 374–453 (KMRL…SEVE). Residues 26–348 (MVIRVGQTSL…LVKIEEGICS (323 aa)) form the Brix domain. Basic and acidic residues predominate over residues 288–300 (PVEKKDNKEREKE). The residue at position 301 (Thr-301) is a Phosphothreonine. Basic and acidic residues predominate over residues 374–398 (KMRLKEQRKKEQEENIAKKKAVKDA). The span at 399–409 (KKQRKLERRKA) shows a compositional bias: basic residues. The span at 410-423 (RAAEGGEGQGKDDA) shows a compositional bias: basic and acidic residues. Positions 442–453 (EDLDSDLFSEVE) are enriched in acidic residues.

Part of a complex that includes BRX1, RPF1, RPF2 and SSF1 or SSF2.

The protein localises to the nucleus. It localises to the nucleolus. Required for biogenesis of the 60S ribosomal subunit. The protein is Ribosome biogenesis protein SSF1 (SSF1) of Saccharomyces cerevisiae (strain ATCC 204508 / S288c) (Baker's yeast).